The following is a 210-amino-acid chain: Uracil phosphoribosyltransferase (210 aa).

Residues Arg78, Arg103, and 130–138 (DPMLATGGT) each bind 5-phospho-alpha-D-ribose 1-diphosphate. Residues Ile193 and 198-200 (GDA) contribute to the uracil site. Asp199 serves as a coordination point for 5-phospho-alpha-D-ribose 1-diphosphate.

The protein belongs to the UPRTase family. Requires Mg(2+) as cofactor.

It carries out the reaction UMP + diphosphate = 5-phospho-alpha-D-ribose 1-diphosphate + uracil. The protein operates within pyrimidine metabolism; UMP biosynthesis via salvage pathway; UMP from uracil: step 1/1. Allosterically activated by GTP. Functionally, catalyzes the conversion of uracil and 5-phospho-alpha-D-ribose 1-diphosphate (PRPP) to UMP and diphosphate. The protein is Uracil phosphoribosyltransferase of Xanthomonas euvesicatoria pv. vesicatoria (strain 85-10) (Xanthomonas campestris pv. vesicatoria).